The following is a 385-amino-acid chain: 8-amino-7-oxononanoate synthase (385 aa).

R21 is a substrate binding site. 108 to 109 (GF) contributes to the pyridoxal 5'-phosphate binding site. H133 contributes to the substrate binding site. The pyridoxal 5'-phosphate site is built by S179, H207, and T233. K236 carries the N6-(pyridoxal phosphate)lysine modification. Substrate is bound at residue T352.

It belongs to the class-II pyridoxal-phosphate-dependent aminotransferase family. BioF subfamily. As to quaternary structure, homodimer. It depends on pyridoxal 5'-phosphate as a cofactor.

The catalysed reaction is 6-carboxyhexanoyl-[ACP] + L-alanine + H(+) = (8S)-8-amino-7-oxononanoate + holo-[ACP] + CO2. The protein operates within cofactor biosynthesis; biotin biosynthesis. In terms of biological role, catalyzes the decarboxylative condensation of pimeloyl-[acyl-carrier protein] and L-alanine to produce 8-amino-7-oxononanoate (AON), [acyl-carrier protein], and carbon dioxide. In Salmonella choleraesuis (strain SC-B67), this protein is 8-amino-7-oxononanoate synthase.